Consider the following 341-residue polypeptide: Ribonucleoside-diphosphate reductase subunit beta (341 aa).

Fe cation contacts are provided by aspartate 89, glutamate 120, and histidine 123. The active site involves tyrosine 127. 3 residues coordinate Fe cation: glutamate 185, glutamate 219, and histidine 222.

The protein belongs to the ribonucleoside diphosphate reductase small chain family. In terms of assembly, tetramer of two alpha and two beta subunits. Fe cation serves as cofactor.

The catalysed reaction is a 2'-deoxyribonucleoside 5'-diphosphate + [thioredoxin]-disulfide + H2O = a ribonucleoside 5'-diphosphate + [thioredoxin]-dithiol. Provides the precursors necessary for DNA synthesis. Catalyzes the biosynthesis of deoxyribonucleotides from the corresponding ribonucleotides. In Helicobacter pylori (strain J99 / ATCC 700824) (Campylobacter pylori J99), this protein is Ribonucleoside-diphosphate reductase subunit beta (nrdB).